A 570-amino-acid chain; its full sequence is Formate--tetrahydrofolate ligase (570 aa).

An ATP-binding site is contributed by 65–72; that stretch reads TPHGEGKT.

This sequence belongs to the formate--tetrahydrofolate ligase family.

The enzyme catalyses (6S)-5,6,7,8-tetrahydrofolate + formate + ATP = (6R)-10-formyltetrahydrofolate + ADP + phosphate. It functions in the pathway one-carbon metabolism; tetrahydrofolate interconversion. This is Formate--tetrahydrofolate ligase from Shewanella sp. (strain ANA-3).